Consider the following 605-residue polypeptide: MDQHKGDASLGGIVKALGLVFGDIGTSPIYTLTVIFTLTQPTRENVFGILSLVFWTMTILVTMEYAWLAMSLGRKGQGGEIVLREIIMKLVKTGRLVAFAGFLSFVGVSLLLGDGVITPAISILSAVEGLLLIPGLEGLSTGTLVAIAAAIAIGLFSVQFKGTDRVAGAFGPIMAVWFSTLAVTGVVSALSMPEIVEAINPWHAFTFFRENGLAGYFVLSEVILCSTGGEALYADMGHLGRRPIVKSWYFVFMALYLNYLGQGVFAITHPEAKNLLFGMVRDQMPTLYIPFLILTIMATIIASQSIISGVFSIVYQGITTRLLPLMRVDYTSREIKSQIYLGAVNWSLMVAVILVMLLFRKSENLAAAYGMAVTGSMTITGIMMIIVFAHTTKKWRALVALVITLIDAAYLLSTFSKIPHGAYWSLILASIPFVTIIIWTRGQRSLYHALKPLDLETFLISYEQIYAKGPIRGTGLFFTRDTDVVPPYVVHCIIRSNIIYERNVFISLVITDEPLGVETELIKGIGPGLDAFRIEAGYMEVVDIEALLKANGIQEKVIFYGVEDISTRNPLWRVFSVFKKLTPNFVQFHKLPASRLQGVVTRVEM.

12 helical membrane passes run 16 to 36 (ALGLVFGDIGTSPIYTLTVIF), 46 to 66 (VFGILSLVFWTMTILVTMEYA), 97 to 117 (VAFAGFLSFVGVSLLLGDGVI), 138 to 158 (GLSTGTLVAIAAAIAIGLFSV), 166 to 186 (VAGAFGPIMAVWFSTLAVTGV), 212 to 232 (GLAGYFVLSEVILCSTGGEAL), 248 to 268 (WYFVFMALYLNYLGQGVFAIT), 287 to 307 (LYIPFLILTIMATIIASQSII), 339 to 359 (IYLGAVNWSLMVAVILVMLLF), 368 to 388 (AYGMAVTGSMTITGIMMIIVF), 397 to 417 (ALVALVITLIDAAYLLSTFSK), and 418 to 438 (IPHGAYWSLILASIPFVTIII).

It belongs to the HAK/KUP transporter (TC 2.A.72) family.

It is found in the cell inner membrane. It catalyses the reaction K(+)(in) + H(+)(in) = K(+)(out) + H(+)(out). Transport of potassium into the cell. Likely operates as a K(+):H(+) symporter. This is Probable potassium transport system protein Kup 1 from Geobacter metallireducens (strain ATCC 53774 / DSM 7210 / GS-15).